The chain runs to 795 residues: Phenylalanine--tRNA ligase beta subunit (795 aa).

In terms of domain architecture, tRNA-binding spans 39–148 (AGSFHGVVVG…ADAPIGTDIR (110 aa)). Residues 401–476 (PKRATITLRR…RVYGYNNIPD (76 aa)) enclose the B5 domain. 4 residues coordinate Mg(2+): Asp-454, Asp-460, Glu-463, and Glu-464. Residues 701–794 (SRFPANRRDI…LKERFQASLR (94 aa)) form the FDX-ACB domain.

This sequence belongs to the phenylalanyl-tRNA synthetase beta subunit family. Type 1 subfamily. In terms of assembly, tetramer of two alpha and two beta subunits. Requires Mg(2+) as cofactor.

The protein localises to the cytoplasm. The catalysed reaction is tRNA(Phe) + L-phenylalanine + ATP = L-phenylalanyl-tRNA(Phe) + AMP + diphosphate + H(+). This chain is Phenylalanine--tRNA ligase beta subunit, found in Escherichia coli O157:H7.